A 347-amino-acid polypeptide reads, in one-letter code: KRR1 small subunit processome component homolog (347 aa).

Residues 124-194 (GCDIIKIGNL…VRDIVLETMN (71 aa)) enclose the KH domain. Over residues 231–246 (NKNLSKRKQPKVKKPK) the composition is skewed to basic residues. Residues 231-347 (NKNLSKRKQP…LLKANKKSKS (117 aa)) form a disordered region. Residues 271 to 304 (FLNKEQKQAKRQQERQTKQAEAAKKQDERRNKDF) adopt a coiled-coil conformation. Basic and acidic residues-rich tracts occupy residues 272 to 303 (LNKE…RNKD) and 318 to 329 (KANDNDSSDSRV). Residues 337–347 (KLLKANKKSKS) are compositionally biased toward basic residues.

The protein belongs to the KRR1 family. In terms of assembly, monomer. Component of the ribosomal small subunit (SSU) processome.

The protein localises to the nucleus. It localises to the nucleolus. Its function is as follows. Required for 40S ribosome biogenesis. Involved in nucleolar processing of pre-18S ribosomal RNA and ribosome assembly. Binds to RNA. Required for female germline development, cell viability during eye development and for survival of dividing cells and epithelial cells during early wing disk development. This Drosophila willistoni (Fruit fly) protein is KRR1 small subunit processome component homolog.